The sequence spans 371 residues: Ferredoxin--NADP reductase, apicoplast (371 aa).

The N-terminal 18 residues, 1-18 (MKIRFVFILSVLISGVCC), are a transit peptide targeting the apicoplast. FAD contacts are provided by residues lysine 68, 155-159 (ARLYS), 172-179 (AIKIHKYE), 192-194 (YCS), and threonine 235. The FAD-binding FR-type domain maps to 68–218 (KNPLKCKIVD…TGAHGYFNLP (151 aa)). Lysine 174 is a binding site for NADP(+). NADP(+) is bound by residues 272-273 (VY), serine 302, 313-315 (YVQ), and 341-343 (HKS). 2 residues coordinate FAD: lysine 342 and tyrosine 371.

It belongs to the ferredoxin--NADP reductase type 1 family. Monomer. Homodimer; disulfide linked. NADP binding accelerates formation of an inactive, disulfide-linked homodimer when the protein is exposed to air for 24 hours or more (in vitro); the physiological relevance of this is uncertain. FAD is required as a cofactor.

It localises to the plastid. It is found in the apicoplast. The catalysed reaction is 2 reduced [2Fe-2S]-[ferredoxin] + NADP(+) + H(+) = 2 oxidized [2Fe-2S]-[ferredoxin] + NADPH. In terms of biological role, may play a role in the terminal step of the DOXP/MEP pathway for isoprenoid precursor biosynthesis. This chain is Ferredoxin--NADP reductase, apicoplast, found in Plasmodium falciparum (isolate 3D7).